Consider the following 209-residue polypeptide: Large ribosomal subunit protein uL3 (209 aa).

The residue at position 150 (Q150) is an N5-methylglutamine.

The protein belongs to the universal ribosomal protein uL3 family. Part of the 50S ribosomal subunit. Forms a cluster with proteins L14 and L19. In terms of processing, methylated by PrmB.

In terms of biological role, one of the primary rRNA binding proteins, it binds directly near the 3'-end of the 23S rRNA, where it nucleates assembly of the 50S subunit. This Salmonella paratyphi C (strain RKS4594) protein is Large ribosomal subunit protein uL3.